We begin with the raw amino-acid sequence, 507 residues long: Maturase K (507 aa).

Belongs to the intron maturase 2 family. MatK subfamily.

Its subcellular location is the plastid. The protein localises to the chloroplast. Functionally, usually encoded in the trnK tRNA gene intron. Probably assists in splicing its own and other chloroplast group II introns. The protein is Maturase K of Kalmia buxifolia (Sand myrtle).